Here is a 305-residue protein sequence, read N- to C-terminus: MTRKLEIPESRDLPDWSHIGGGKVRELYVHRQYKNILLMFASNRVSAFDFVLEPEIPEKGRMLTQMSNWWFRKLPAENHLLENYDQELYRDLASHIPSHILERSTICRKMDIIPFEFVIRGYLTGSAWADYLENNTVYGIKLKGKFRQGDRLPGPIFTPTTKSRTKDTPVRYEDLVNAIGLSHAQQLREMCTDYYTTAEQIARNKGLIIADAKFEFGIAEGKVYLADELLTADSARYWDINSWGQFDLPIERRLDSFDKQAVRDWVKCNSGKNITPQNITPLRLPQELIQTVYKKYKTLLAKLTG.

This sequence belongs to the SAICAR synthetase family.

The catalysed reaction is 5-amino-1-(5-phospho-D-ribosyl)imidazole-4-carboxylate + L-aspartate + ATP = (2S)-2-[5-amino-1-(5-phospho-beta-D-ribosyl)imidazole-4-carboxamido]succinate + ADP + phosphate + 2 H(+). The protein operates within purine metabolism; IMP biosynthesis via de novo pathway; 5-amino-1-(5-phospho-D-ribosyl)imidazole-4-carboxamide from 5-amino-1-(5-phospho-D-ribosyl)imidazole-4-carboxylate: step 1/2. This is Phosphoribosylaminoimidazole-succinocarboxamide synthase from Tropheryma whipplei (strain Twist) (Whipple's bacillus).